A 440-amino-acid polypeptide reads, in one-letter code: Lipopolysaccharide-processing protein LpsZ (440 aa).

This sequence to E.coli capsule polysaccharide export protein KpsC.

It localises to the cytoplasm. Involved in the invasion of nitrogen fixation nodules. May be involved in the biosynthesis of lipopolysaccharides as an enzyme or a regulatory protein. The polypeptide is Lipopolysaccharide-processing protein LpsZ (lpsZ) (Rhizobium meliloti (Ensifer meliloti)).